Reading from the N-terminus, the 252-residue chain is MGTGGRGRPTPGLNVYEVFLSLQGEGKFVGEPQAFVRFSGCNLRCAYCDEPASRSSRRRALIRRVSGEVELELPVPCGPEDVVEVLVELEDLEDTFGTVSLTGGEPLVQPWGALKELIERLRERGFRVLLETNASLPDRAPLIDELADVVSADVKLPSHGPNMDDFPDRCLRFLERISAEVYAKVVLVDEECYQHAESALKGLHRLGVEPIYLQPATGSEHDLEDLWELAGLVNADVRVLPQVHKLVDFIPR.

Residues 22–24 and R37 each bind substrate; that span reads LQG. One can recognise a Radical SAM core domain in the interval 28-251; sequence FVGEPQAFVR…QVHKLVDFIP (224 aa). 3 residues coordinate [4Fe-4S] cluster: C41, C45, and C48. T102 lines the substrate pocket. An S-adenosyl-L-methionine-binding site is contributed by G104.

This sequence belongs to the radical SAM superfamily. 7-carboxy-7-deazaguanine synthase family. Homodimer. [4Fe-4S] cluster serves as cofactor. Requires S-adenosyl-L-methionine as cofactor. The cofactor is Mg(2+).

It carries out the reaction 6-carboxy-5,6,7,8-tetrahydropterin + H(+) = 7-carboxy-7-deazaguanine + NH4(+). The protein operates within purine metabolism; 7-cyano-7-deazaguanine biosynthesis. Catalyzes the complex heterocyclic radical-mediated conversion of 6-carboxy-5,6,7,8-tetrahydropterin (CPH4) to 7-carboxy-7-deazaguanine (CDG), a step common to the biosynthetic pathways of all 7-deazapurine-containing compounds. The protein is 7-carboxy-7-deazaguanine synthase of Methanopyrus kandleri (strain AV19 / DSM 6324 / JCM 9639 / NBRC 100938).